A 282-amino-acid polypeptide reads, in one-letter code: Putative quercetin 2,3-dioxygenase VC_A0969 (282 aa).

A disordered region spans residues 1 to 21 (MTKDREIRQTVPAQPTSDGDG). A divalent metal cation-binding residues include His59, His61, His103, and Glu105.

The protein belongs to the pirin family. The cofactor is a divalent metal cation.

The catalysed reaction is quercetin + O2 = 2-(3,4-dihydroxybenzoyloxy)-4,6-dihydroxybenzoate + CO. It participates in flavonoid metabolism; quercetin degradation. Its function is as follows. Putative quercetin 2,3-dioxygenase. This Vibrio cholerae serotype O1 (strain ATCC 39315 / El Tor Inaba N16961) protein is Putative quercetin 2,3-dioxygenase VC_A0969.